Here is a 218-residue protein sequence, read N- to C-terminus: 4-coumaroyl-homoserine lactone synthase (218 aa).

Belongs to the autoinducer synthase family.

The catalysed reaction is 4-coumaroyl-CoA + S-adenosyl-L-methionine = N-(4-coumaroyl)-L-homoserine lactone + S-methyl-5'-thioadenosine + CoA + H(+). Catalyzes the synthesis of 4-coumaroyl-homoserine lactone, a quorum-sensing (QS) autoinducer molecule which binds to RpaR transcriptional regulator to regulate expression of QS-dependent genes. The chain is 4-coumaroyl-homoserine lactone synthase from Rhodopseudomonas palustris (strain ATCC BAA-98 / CGA009).